The primary structure comprises 436 residues: Cytochrome P450 monooxygenase phqO (436 aa).

Residue C377 participates in heme binding.

It belongs to the cytochrome P450 family. It depends on heme as a cofactor.

It participates in alkaloid biosynthesis. Its function is as follows. Cytochrome P450 monooxygenase; part of the gene cluster that mediates the biosynthesis of paraherquamide, a fungal indole alkaloid that belongs to a family of natural products containing a characteristic bicyclo[2.2.2]diazaoctane core. The first steps in the biosynthesis of paraherquamide is the production of the beta-methyl-proline precursor from L-isoleucine. They require oxidation of a terminally hydroxylated L-isoleucine to the corresponding aldehyde by enzymes which have still to be identified. Spontaneous cyclization and dehydration would yield the 4-methyl pyrolline-5-carboxylic acid, which is then reduced by the pyrroline-5-carboxylate reductase phqD leading to the beta-methyl-proline precursor. The next step of paraherquamide biosynthesis involves coupling of beta-methyl-proline and L-tryptophan by the bimodular NRPS phqB, to produce a monooxopiperazine intermediate. The reductase (R) domain of phqB utilizes NADPH for hydride transfer to reduce the thioester bond of the T domain-tethered linear dipeptide to a hemithioaminal intermediate, which spontaneously cleaves the C-S bond to release the aldehyde product. This compound undergoes spontaneous cyclization and dehydration to give a dienamine which is reverse prenylated at C-2 by the reverse prenyltransferase phqJ. The other prenyltransferase present in the cluster, phqI may be a redundant gene in the pathway. During biosynthetic assembly, the key step to produce the polycyclic core is catalyzed by the bifunctional reductase and intramolecular [4+2] Diels-Alderase, phqE, resulting in formation of the [2.2.2] diazaoctane intermediate preparaherquamide. Following formation of preparaherquamide, an indole 2,3-epoxidation-initiated pinacol-like rearrangement is catalyzed by the phqK FAD-dependent monooxygenase. The prenyltransferase phqA, the cytochrome P450 monooxygenase phqL, and the FAD-linked oxidoreductase phqH (or the cytochrome P450 monooxygenase phqM), are proposed to be involved in the formation of the pyran ring. The FAD-dependent monooxygenase phqK is likely responsible for generation of the spiro-oxindole, and the N-methylation is likely mediated by the phqN methyltransferase leading to the isolable natural product paraherquamide F. However, the order of these biosynthetic steps has still to be determined. In late-stage paraherquamide biosynthesis, the third P450 monooxygenase, phqO, is probably responsible for the C-14 hydroxylation, transforming paraherquamide F to paraherquamide G, and paraherquamide E to the final product paraherquamide A. The expansion from the 6-membered ring pyran (in paraherquamides F and G) to the 7-membered dioxepin ring (in paraherquamides A and E) represents a poorly understood but intriguing process that probably involves the 2-oxoglutarate-dependent dioxygenase phqC. Finally, the remaining members of the paraherquamide cluster, including phqI as well as phqM (or phqH), do not have a clearly prescribed role and appear to be redundant. This is Cytochrome P450 monooxygenase phqO from Penicillium fellutanum.